We begin with the raw amino-acid sequence, 352 residues long: Leukotriene B4 receptor 1 (352 aa).

Over 1–19 (MNTTSSAAPPSLGVEFISL) the chain is Extracellular. N-linked (GlcNAc...) asparagine glycosylation is present at Asn2. The helical transmembrane segment at 20-42 (LAIILLSVALAVGLPGNSFVVWS) threads the bilayer. At 43 to 54 (ILKRMQKRSVTA) the chain is on the cytoplasmic side. The helical transmembrane segment at 55–75 (LMVLNLALADLAVLLTAPFFL) threads the bilayer. The Extracellular segment spans residues 76 to 91 (HFLAQGTWSFGLAGCR). A helical transmembrane segment spans residues 92–113 (LCHYVCGVSMYASVLLITAMSL). Topologically, residues 114–138 (DRSLAVARPFVSQKLRTKAMARRVL) are cytoplasmic. Residues 139–159 (AGIWVLSFLLATPVLAYRTVV) form a helical membrane-spanning segment. Topologically, residues 160 to 178 (PWKTNMSLCFPRYPSEGHR) are extracellular. N-linked (GlcNAc...) asparagine glycosylation is present at Asn164. The helical transmembrane segment at 179–199 (AFHLIFEAVTGFLLPFLAVVA) threads the bilayer. The Cytoplasmic portion of the chain corresponds to 200 to 221 (SYSDIGRRLQARRFRRSRRTGR). A helical membrane pass occupies residues 222-242 (LVVLIILTFAAFWLPYHVVNL). Topologically, residues 243-268 (AEAGRALAGQAAGLGLVGKRLSLARN) are extracellular. The chain crosses the membrane as a helical span at residues 269–289 (VLIALAFLSSSVNPVLYACAG). The Cytoplasmic segment spans residues 290–352 (GGLLRSAGVG…SSPLKLNELN (63 aa)). Composition is skewed to polar residues over residues 310-326 (SEAS…QTAR) and 338-352 (ESLT…NELN). The segment at 310 to 352 (SEASSTRRGGSLGQTARSGPAALEPGPSESLTASSPLKLNELN) is disordered.

The protein belongs to the G-protein coupled receptor 1 family. Post-translationally, phosphorylated by GRK6 upon leukotriene B4 binding; which promotes desensitization. In terms of tissue distribution, expressed at highest levels in heart, skeletal muscle and at lower levels in brain and liver. High level of expression in lymphoid tissues.

Its subcellular location is the cell membrane. In terms of biological role, receptor for extracellular ATP &gt; UTP and ADP. The activity of this receptor is mediated by G proteins which activate a phosphatidylinositol-calcium second messenger system. May be the cardiac P2Y receptor involved in the regulation of cardiac muscle contraction through modulation of L-type calcium currents. Is a receptor for leukotriene B4, a potent chemoattractant involved in inflammation and immune response. This chain is Leukotriene B4 receptor 1 (LTB4R), found in Homo sapiens (Human).